Reading from the N-terminus, the 230-residue chain is 7-cyano-7-deazaguanine synthase (230 aa).

14–24 serves as a coordination point for ATP; that stretch reads LSGGLDSTTTL. Positions 194, 204, 207, and 210 each coordinate Zn(2+).

The protein belongs to the QueC family. The cofactor is Zn(2+).

The catalysed reaction is 7-carboxy-7-deazaguanine + NH4(+) + ATP = 7-cyano-7-deazaguanine + ADP + phosphate + H2O + H(+). The protein operates within purine metabolism; 7-cyano-7-deazaguanine biosynthesis. Functionally, catalyzes the ATP-dependent conversion of 7-carboxy-7-deazaguanine (CDG) to 7-cyano-7-deazaguanine (preQ(0)). The sequence is that of 7-cyano-7-deazaguanine synthase from Ruthia magnifica subsp. Calyptogena magnifica.